A 141-amino-acid chain; its full sequence is MAKKVIKEVKLQIPAGKANPAPPVGPALGQAGVNIMGFCKEFNARTADQAGLIIPVVITVFEDRSFTFITKTPPAAVLLKKAAKVEKGSGEPNKTKVASVTRAQVQEIAETKMPDLNAANVESAMLMVEGTARSMGITIQD.

The protein belongs to the universal ribosomal protein uL11 family. As to quaternary structure, part of the ribosomal stalk of the 50S ribosomal subunit. Interacts with L10 and the large rRNA to form the base of the stalk. L10 forms an elongated spine to which L12 dimers bind in a sequential fashion forming a multimeric L10(L12)X complex. Post-translationally, one or more lysine residues are methylated.

Forms part of the ribosomal stalk which helps the ribosome interact with GTP-bound translation factors. This chain is Large ribosomal subunit protein uL11, found in Listeria innocua serovar 6a (strain ATCC BAA-680 / CLIP 11262).